Here is a 327-residue protein sequence, read N- to C-terminus: Metal-binding protein YtgA (327 aa).

Residues 1-20 (MDAKMGYIFKVMRWIFCFVA) form the signal peptide. Fe(2+) is bound by residues H73, H139, H205, and D297.

This sequence belongs to the bacterial solute-binding protein 9 family. In terms of assembly, monomer.

The protein localises to the periplasm. Functionally, part of the ATP-binding cassette (ABC) transport system YtgABCD involved in metal import. Binds Fe(2+), Mn(2+) and Ni(2+), with a preference for Fe(2+) and delivers them to the membrane permease for translocation into the cytoplasm. The protein is Metal-binding protein YtgA of Chlamydia pneumoniae (Chlamydophila pneumoniae).